The sequence spans 118 residues: Beta-2-microglobulin (118 aa).

The first 20 residues, 1–20, serve as a signal peptide directing secretion; that stretch reads MAPLVALVLLGLLSLSGLDA. An Ig-like C1-type domain is found at 25 to 112; it reads PKVQVYSRHP…HVTLDKPKIV (88 aa). Cysteines 45 and 99 form a disulfide.

The protein belongs to the beta-2-microglobulin family. Heterodimer of an alpha chain and a beta chain. Beta-2-microglobulin is the beta-chain of major histocompatibility complex class I molecules.

It localises to the secreted. Its function is as follows. Component of the class I major histocompatibility complex (MHC). Involved in the presentation of peptide antigens to the immune system. This chain is Beta-2-microglobulin (B2M), found in Sus scrofa (Pig).